Here is a 599-residue protein sequence, read N- to C-terminus: Thiamine transporter THI72 (599 aa).

Helical transmembrane passes span tryptophan 42 to isoleucine 62, isoleucine 78 to proline 98, phenylalanine 112 to valine 132, leucine 174 to histidine 194, tyrosine 197 to leucine 217, isoleucine 280 to alanine 300, phenylalanine 333 to phenylalanine 353, glycine 372 to serine 392, phenylalanine 395 to cysteine 415, alanine 447 to asparagine 467, and serine 484 to phenylalanine 504. The interval histidine 553–alanine 599 is disordered. Residues serine 560 and serine 572 each carry the phosphoserine modification. Residues glutamate 579–serine 590 show a composition bias toward basic and acidic residues.

The protein belongs to the purine-cytosine permease (2.A.39) family.

It localises to the membrane. Its function is as follows. Low affinity thiamine transporter responsible for intake of thiamine. It is possible that the primary function is the uptake of closely related compounds and that thiamine transport is a secondary activity of these proteins. The sequence is that of Thiamine transporter THI72 (THI72) from Saccharomyces cerevisiae (strain ATCC 204508 / S288c) (Baker's yeast).